We begin with the raw amino-acid sequence, 736 residues long: 1,4-alpha-glucan branching enzyme GlgB (736 aa).

The Nucleophile role is filled by D415. The Proton donor role is filled by E468.

It belongs to the glycosyl hydrolase 13 family. GlgB subfamily. Monomer.

The catalysed reaction is Transfers a segment of a (1-&gt;4)-alpha-D-glucan chain to a primary hydroxy group in a similar glucan chain.. It functions in the pathway glycan biosynthesis; glycogen biosynthesis. In terms of biological role, catalyzes the formation of the alpha-1,6-glucosidic linkages in glycogen by scission of a 1,4-alpha-linked oligosaccharide from growing alpha-1,4-glucan chains and the subsequent attachment of the oligosaccharide to the alpha-1,6 position. The sequence is that of 1,4-alpha-glucan branching enzyme GlgB from Rhodopirellula baltica (strain DSM 10527 / NCIMB 13988 / SH1).